We begin with the raw amino-acid sequence, 284 residues long: Hypersensitive-induced response protein 1 (284 aa).

The N-myristoyl glycine moiety is linked to residue G2.

In terms of assembly, interacts with LRR1.

It is found in the cell membrane. Its function is as follows. Positive regulator of hypersensitive response (HR)-like cell death. May be involved in potassium ion channel regulation. In Oryza sativa subsp. japonica (Rice), this protein is Hypersensitive-induced response protein 1.